The sequence spans 185 residues: Large ribosomal subunit protein uL5 (185 aa).

The protein belongs to the universal ribosomal protein uL5 family. As to quaternary structure, part of the 50S ribosomal subunit; part of the 5S rRNA subcomplex. Contacts the 5S rRNA and the P site tRNA. Forms a bridge to the 30S subunit in the 70S ribosome. Both N-terminus methionine truncation and retention have been observed for this protein. Post-translationally, may be methylated twice, on undetermined residues.

Functionally, this is one of the proteins that bind and probably mediate the attachment of the 5S RNA into the large ribosomal subunit, where it forms part of the central protuberance. In the 70S ribosome it contacts protein S13 of the 30S subunit (bridge B1b), connecting the 2 subunits; this bridge is implicated in subunit movement. Contacts the P site tRNA; the 5S rRNA and some of its associated proteins might help stabilize positioning of ribosome-bound tRNAs. The chain is Large ribosomal subunit protein uL5 from Rhodopseudomonas palustris (strain ATCC BAA-98 / CGA009).